The sequence spans 180 residues: UPF0303 protein PSEEN3311 (180 aa).

Belongs to the UPF0303 family.

In Pseudomonas entomophila (strain L48), this protein is UPF0303 protein PSEEN3311.